The primary structure comprises 255 residues: Syntaxin-6 (255 aa).

N-acetylserine is present on Ser2. Phosphoserine is present on Ser2. Residues 2–168 form a required for interaction with VPS51 region; it reads SMEDPFFVVK…QAQQQLIVEQ (167 aa). Residues 2-234 lie on the Cytoplasmic side of the membrane; it reads SMEDPFFVVK…VSHMTSDRRQ (233 aa). Positions 41–74 form a coiled coil; the sequence is EEIDWTTNELRNNLRSIEWDLEDLDETISIVEAN. Phosphoserine is present on residues Ser129 and Ser152. Residues 163-225 form the t-SNARE coiled-coil homology domain; sequence QLIVEQQDEQ…DNVMKKLAKV (63 aa). A helical; Anchor for type IV membrane protein membrane pass occupies residues 235–255; it reads WCAIAILFAVLLVVLILFLVL.

The protein belongs to the syntaxin family. As to quaternary structure, identified in a complex containing STX6, STX12, VAMP4 and VTI1A. Binds EEA1. Interacts with VPS45A. Interacts with MARCHF2; the interaction promotes MARCHF2-mediated ubiquitination and degradation of CFTR. Interacts with MARCHF3. Interacts with GOPC. Interacts with BLTP3B (via C-terminal coiled-coil domain). Interacts with BAIAP3; this interaction is increased in the presence of calcium. Interacts with VPS13B.

The protein resides in the golgi apparatus membrane. Its subcellular location is the golgi apparatus. The protein localises to the trans-Golgi network membrane. It localises to the recycling endosome membrane. SNARE promoting movement of transport vesicles to target membranes. Targets endosomes to the trans-Golgi network, and may therefore function in retrograde trafficking. Together with SNARE STX12, promotes movement of vesicles from endosomes to the cell membrane, and may therefore function in the endocytic recycling pathway. This chain is Syntaxin-6 (STX6), found in Homo sapiens (Human).